Reading from the N-terminus, the 596-residue chain is RNA-binding protein involved in heterochromatin assembly dri1 (596 aa).

Serine 176 carries the post-translational modification Phosphoserine. The RRM domain maps to 236-314 (KIVHVAGLTN…RMLEIIPSST (79 aa)). Residues 335–364 (RPGDWNCPMCGFSNFQRRTSCFRCSFPGPT) form a RanBP2-type 1 zinc finger. Serine 429 carries the phosphoserine modification. RanBP2-type zinc fingers lie at residues 437 to 468 (RAGD…SRAT) and 552 to 580 (DQGD…PHYS).

Interacts with dpb4. Interacts with chp1.

The protein resides in the chromosome. The protein localises to the nucleus. Its subcellular location is the cytoplasm. It is found in the cytoplasmic granule. Mediates heterochromatin assembly by promoting RNAi-mediated heterochromatin silencing and histone deacetylation. Binds pericetromeric transcripts and recruits the RNA-induced transcriptional silencing (RITS) complex to heterochromatin. Recruits sir2 to chromatin to promote deacetylation of 'Lys-9' of histone H3. Involved in bipolar spindle assembly during mitosis. Required for proper localization of kinesin-14/Klp2 on the spindle microtubules. The chain is RNA-binding protein involved in heterochromatin assembly dri1 from Schizosaccharomyces pombe (strain 972 / ATCC 24843) (Fission yeast).